The chain runs to 297 residues: UTP--glucose-1-phosphate uridylyltransferase YngB (297 aa).

Positions 1–27 (MRKKVRKAVIPAAGLGTRFLPATKAQP) are cleaved as a signal peptide.

Belongs to the UDPGP type 2 family. Homodimer.

It carries out the reaction alpha-D-glucose 1-phosphate + UTP + H(+) = UDP-alpha-D-glucose + diphosphate. The protein operates within glycolipid metabolism; diglucosyl-diacylglycerol biosynthesis. Functionally, catalyzes the formation of UDP-glucose from glucose-1-phosphate and UTP. This is an intermediate step in the biosynthesis of diglucosyl-diacylglycerol (Glc2-DAG), i.e. the predominant glycolipid found in B.subtilis membrane, which is also used as a membrane anchor for lipoteichoic acid (LTA). YngB contributes to wall teichoic acid (WTA) glucosylation and glycolipid formation under anaerobic fermentative growth conditions. Might also enter other glycosylation pathways, leading to the decorating of other cell envelope components with glucose residues under anaerobic or other growth conditions. This chain is UTP--glucose-1-phosphate uridylyltransferase YngB (yngB), found in Bacillus subtilis (strain 168).